Here is an 87-residue protein sequence, read N- to C-terminus: Pro-gurmarin (87 aa).

The signal sequence occupies residues 1–20 (MAKFAAIVLLILVASATVNA). Positions 21 to 52 (VKEHDELPTTGMSRKILLQPVFKSLIISIAEG) are excised as a propeptide. Residue glutamine 53 is modified to Pyrrolidone carboxylic acid. 3 disulfides stabilise this stretch: cysteine 55-cysteine 70, cysteine 62-cysteine 75, and cysteine 69-cysteine 85.

In terms of tissue distribution, expressed in leaves (at protein level).

Functionally, peptide that strongly, but reversibly, suppresses the sweet taste-response to various sweeteners, including sugars, sweet amino acids and the artificial sweetener saccharin. In rodents, potentially binds to a sweet taste receptor present on apical microvilli of a subset of taste bud cells. Highly effective at blocking the sweet taste-response in rodents such as rats and mice, though mice may possess a mix of gurmarin-sensitive and -insensitive receptors. Has almost no effect on the sweet taste-response in humans. Inhibits Staphylococcus aureus biofilm formation without affecting bacterial viability. May be one of at least 9 different disulfide-rich peptides produced with varying properties. The sequence is that of Pro-gurmarin from Gymnema sylvestre (Gurmar).